Reading from the N-terminus, the 272-residue chain is Type III pantothenate kinase (272 aa).

Residue 6-13 coordinates ATP; it reads DVRNTHTV. 109 to 112 serves as a coordination point for substrate; it reads GADR. The Proton acceptor role is filled by aspartate 111. Aspartate 131 contributes to the K(+) binding site. Position 134 (serine 134) interacts with ATP. A substrate-binding site is contributed by threonine 186.

The protein belongs to the type III pantothenate kinase family. As to quaternary structure, homodimer. The cofactor is NH4(+). It depends on K(+) as a cofactor.

It is found in the cytoplasm. The catalysed reaction is (R)-pantothenate + ATP = (R)-4'-phosphopantothenate + ADP + H(+). The protein operates within cofactor biosynthesis; coenzyme A biosynthesis; CoA from (R)-pantothenate: step 1/5. Its function is as follows. Catalyzes the phosphorylation of pantothenate (Pan), the first step in CoA biosynthesis. The protein is Type III pantothenate kinase of Mycobacterium marinum (strain ATCC BAA-535 / M).